The chain runs to 88 residues: Large ribosomal subunit protein bL27 (88 aa).

Residues 1–24 form a disordered region; the sequence is MAHKKAGGSSRNGRDSEGRRLGVK.

This sequence belongs to the bacterial ribosomal protein bL27 family.

This Methylobacterium radiotolerans (strain ATCC 27329 / DSM 1819 / JCM 2831 / NBRC 15690 / NCIMB 10815 / 0-1) protein is Large ribosomal subunit protein bL27.